A 597-amino-acid chain; its full sequence is Aspartate--tRNA(Asp/Asn) ligase (597 aa).

L-aspartate is bound at residue Glu175. The interval Gln199–Lys202 is aspartate. L-aspartate-binding residues include Arg221 and His454. ATP is bound at residue Arg221–Glu223. Position 488 (Glu488) interacts with ATP. Residue Arg495 coordinates L-aspartate. Gly540–Arg543 serves as a coordination point for ATP.

Belongs to the class-II aminoacyl-tRNA synthetase family. Type 1 subfamily. As to quaternary structure, homodimer.

The protein localises to the cytoplasm. The catalysed reaction is tRNA(Asx) + L-aspartate + ATP = L-aspartyl-tRNA(Asx) + AMP + diphosphate. Aspartyl-tRNA synthetase with relaxed tRNA specificity since it is able to aspartylate not only its cognate tRNA(Asp) but also tRNA(Asn). Reaction proceeds in two steps: L-aspartate is first activated by ATP to form Asp-AMP and then transferred to the acceptor end of tRNA(Asp/Asn). This Bartonella tribocorum (strain CIP 105476 / IBS 506) protein is Aspartate--tRNA(Asp/Asn) ligase.